The primary structure comprises 535 residues: Serine/threonine-protein kinase C (535 aa).

One can recognise a Protein kinase domain in the interval 12 to 277 (YRIIETLGRG…AMAQTLQGNF (266 aa)). ATP-binding positions include 18 to 26 (LGRGGFGET) and lysine 43. The active-site Proton acceptor is the aspartate 142. The tract at residues 371-535 (NNPPPAVEEP…GEKPIDPEQN (165 aa)) is disordered. Over residues 402–421 (SPIPTPATPSPEPTPSPSPS) the composition is skewed to pro residues. Residues 422 to 435 (PETTSSPTEDTITP) show a composition bias toward low complexity. 2 stretches are compositionally biased toward pro residues: residues 446–464 (APIPEPKPSPSPTISPQPS) and 472–498 (TPAPVPKPSPSPTPKPTVPPQISPTPQ).

The protein belongs to the protein kinase superfamily. Ser/Thr protein kinase family.

It carries out the reaction L-seryl-[protein] + ATP = O-phospho-L-seryl-[protein] + ADP + H(+). It catalyses the reaction L-threonyl-[protein] + ATP = O-phospho-L-threonyl-[protein] + ADP + H(+). In Synechocystis sp. (strain ATCC 27184 / PCC 6803 / Kazusa), this protein is Serine/threonine-protein kinase C (spkC).